Here is a 328-residue protein sequence, read N- to C-terminus: Glycerophosphodiester phosphodiesterase GDPD4 (328 aa).

Residues 35–55 (TILFAVIFLAIFPPLYFHFKL) traverse the membrane as a helical segment. A GP-PDE domain is found at 73-312 (PLVCAHGGDS…SDPSMFQGLM (240 aa)).

This sequence belongs to the glycerophosphoryl diester phosphodiesterase family. Expressed in rosette and cauline leaves.

Its subcellular location is the membrane. It carries out the reaction a sn-glycero-3-phosphodiester + H2O = an alcohol + sn-glycerol 3-phosphate + H(+). The protein is Glycerophosphodiester phosphodiesterase GDPD4 of Arabidopsis thaliana (Mouse-ear cress).